Consider the following 238-residue polypeptide: Capsular polysaccharide phosphotransferase eps5J (238 aa).

It belongs to the stealth family.

The sequence is that of Capsular polysaccharide phosphotransferase eps5J (eps5J) from Streptococcus thermophilus.